The following is a 322-amino-acid chain: Interferon regulatory factor 1 (322 aa).

The IRF tryptophan pentad repeat DNA-binding region spans arginine 5–proline 113. Lysine 78 bears the N6-acetyllysine mark. The segment at glutamate 92 to tyrosine 164 is disordered. Polar residues predominate over residues aspartate 146–leucine 157. Residues lysine 276 and lysine 296 each participate in a glycyl lysine isopeptide (Lys-Gly) (interchain with G-Cter in SUMO) cross-link.

The protein belongs to the IRF family. As to quaternary structure, monomer. Homodimer. Interacts with EP300. Interacts with MYD88. Interacts with PIAS3. Interacts with SPOP. In terms of processing, phosphorylated by CK2 and this positively regulates its activity. Post-translationally, sumoylation represses the transcriptional activity and displays enhanced resistance to protein degradation. Sumoylated by UBE2I/UBC9 and SUMO1. Inactivates the tumor suppressor activity. Elevated levels in tumor cells. Major site is Lys-276. Sumoylation is enhanced by PIAS3. Desumoylated by SENP1 in tumor cells and appears to compete with ubiquitination on C-terminal sites. Ubiquitinated in a SPOP-depedent manner. Appears to compete with sumoylation on C-terminal sites.

The protein localises to the nucleus. It localises to the cytoplasm. Activated by MYD88. Functionally, transcriptional regulator which displays a remarkable functional diversity in the regulation of cellular responses. Regulates transcription of IFN and IFN-inducible genes, host response to viral and bacterial infections, regulation of many genes expressed during hematopoiesis, inflammation, immune responses and cell proliferation and differentiation, regulation of the cell cycle and induction of growth arrest and programmed cell death following DNA damage. Stimulates both innate and acquired immune responses through the activation of specific target genes and can act as a transcriptional activator and repressor regulating target genes by binding to an interferon-stimulated response element (ISRE) in their promoters. Has an essentail role in IFNG-dependent immunity to mycobacteria. Binds to a consensus sequence in gene promoters. Its target genes for transcriptional activation activity include: genes involved in anti-viral response, such as IFN-alpha/beta, RIGI, TNFSF10/TRAIL, ZBP1, OAS1/2, PIAS1/GBP, EIF2AK2/PKR and RSAD2/viperin; antibacterial response, such as GBP2, GBP5 and NOS2/INOS; anti-proliferative response, such as p53/TP53, LOX and CDKN1A; apoptosis, such as BBC3/PUMA, CASP1, CASP7 and CASP8; immune response, such as IL7, IL12A/B and IL15, PTGS2/COX2 and CYBB; DNA damage responses and DNA repair, such as POLQ/POLH; MHC class I expression, such as TAP1, PSMB9/LMP2, PSME1/PA28A, PSME2/PA28B and B2M and MHC class II expression, such as CIITA; metabolic enzymes, such as ACOD1/IRG1. Represses genes involved in anti-proliferative response, such as BIRC5/survivin, CCNB1, CCNE1, CDK1, CDK2 and CDK4 and in immune response, such as FOXP3, IL4, ANXA2 and TLR4. Stimulates p53/TP53-dependent transcription through enhanced recruitment of EP300 leading to increased acetylation of p53/TP53. Plays an important role in immune response directly affecting NK maturation and activity, macrophage production of IL12, Th1 development and maturation of CD8+ T-cells. Also implicated in the differentiation and maturation of dendritic cells and in the suppression of regulatory T (Treg) cells development. Acts as a tumor suppressor and plays a role not only in antagonism of tumor cell growth but also in stimulating an immune response against tumor cells. The protein is Interferon regulatory factor 1 (IRF1) of Bos taurus (Bovine).